We begin with the raw amino-acid sequence, 408 residues long: MEKYLVGGAVRDALLKLPVQEKDWVVVGSSPQEMLNIGYEQVGKDFPVFLHPESHEEYALARTERKSGQGYTGFICHTAPSITIEEDLYRRDLTINAMAYDSHGNLIDPYHGQRDIKLRLLRHVSHTFHEDPLRVLRVARFAARFAHMNFAIAPETLILMKQMIHELLSLSPERIWTETKKALITDNPQVYFTVLRHCGALKILFPELDALFDIPTPTQYCTKINTGYYTMTTLSKAAYLTDDISVRFSVLCRDLGKGIPLNKINKNTKHHDHRKLGITLIHNLCNRFKIPHEIRNFSKITSEYHDYLYNVKILKPEMLMTLFHVFDCWRRPNRIDQIILVSQSDPIRWKNYNNYSLNQENLLRTAFTVTKKISTVDIIKDGFTGSNISRELYARRLHALNSWKNKQI.

2 residues coordinate ATP: G8 and R11. CTP contacts are provided by G8 and R11. E21 and D23 together coordinate Mg(2+). Residues R91, R137, and R140 each coordinate ATP. CTP contacts are provided by R91, R137, and R140. The HD domain maps to 226-329 (TGYYTMTTLS…MTLFHVFDCW (104 aa)).

This sequence belongs to the tRNA nucleotidyltransferase/poly(A) polymerase family. Bacterial CCA-adding enzyme type 2 subfamily. Requires Mg(2+) as cofactor.

The catalysed reaction is a tRNA precursor + 2 CTP + ATP = a tRNA with a 3' CCA end + 3 diphosphate. The enzyme catalyses a tRNA with a 3' CCA end + 2 CTP + ATP = a tRNA with a 3' CCACCA end + 3 diphosphate. Catalyzes the addition and repair of the essential 3'-terminal CCA sequence in tRNAs without using a nucleic acid template. Adds these three nucleotides in the order of C, C, and A to the tRNA nucleotide-73, using CTP and ATP as substrates and producing inorganic pyrophosphate. tRNA 3'-terminal CCA addition is required both for tRNA processing and repair. Also involved in tRNA surveillance by mediating tandem CCA addition to generate a CCACCA at the 3' terminus of unstable tRNAs. While stable tRNAs receive only 3'-terminal CCA, unstable tRNAs are marked with CCACCA and rapidly degraded. This is CCA-adding enzyme from Blochmanniella pennsylvanica (strain BPEN).